The following is a 953-amino-acid chain: MKRGIRRDPFRKRKLGGRAKKVREPTAVNSFYREASLPSVWASLRRREMVRSGARPGQVLSSGRHTGPAKLTNGKKATYLRKIPRFNADSGYSIHSDSESQAETVHGLDGCASLLRDILRNEDSGSETAYLENRSNSRPLESKRYGSKKKRHEKHTIPLVVQKETSSSDNKKQIPNEASARSERDTSDLEQNWSLQDHYRMYSPIIYQALCEHVQTQMSLMNDLTSKNIPNGIPAVPCHAPSHSESQATPHSSYGLCTSTPVWSLQRPPCPPKVHSEVQTDGNSQFASQGKTVSATCTDVLRNSFNTSPGVPCSLPKTDISAIPTLQQLGLVNGILPQQGIHKETDLLKCIQTYLSLFRSHGKETHLDSQTHRSPTQSQPAFLATNEEKCAREQIREATSERKDLNIHVRDTKTVKDVQKAKNVNKTAEKVRIIKYLLGELKALVAEQEDSEIQRLITEMEACISVLPTVSGNTDIQVEIALAMQPLRSENAQLRRQLRILNQQLREQQKTQKPSGAVDCNLELFSLQSLNMSLQNQLEESLKSQELLQSKNEELLKVIENQKDENKKFSSIFKDKDQTILENKQQYDIEITRIKIELEEALVNVKSSQFKLETAEKENQILGITLRQRDAEVTRLRELTRTLQTSMAKLLSDLSVDSARCKPGNNLTKSLLNIHDKQLQHDPAPAHTSIMSYLNKLETNYSFTHSEPLSTIKNEETIEPDKTYENVLSSRGPQNSNTRGMEEASAPGIISALSKQDSDEGSETMALIEDEHNLDNTIYIPFARSTPEKKSPLSKRLSPQPQIRAATTQLVSNSGLAVSGKENKLCTPVICSSSTKEAEDAPEKLSRASDMKDTQLLKKIKEAIGKIPAATKEPEEQTACHGPSGCLSNSLQVKGNTVCDGSVFTSDLMSDWSISSFSTFTSRDEQDFRNGLAALDANIARLQKSLRTGLLEK.

Basic residues predominate over residues 1-21; that stretch reads MKRGIRRDPFRKRKLGGRAKK. 2 disordered regions span residues 1-22 and 52-72; these read MKRGIRRDPFRKRKLGGRAKKV and SGARPGQVLSSGRHTGPAKLT. Position 124 is a phosphoserine (Ser124). Disordered stretches follow at residues 126–189 and 268–287; these read SETA…TSDL and PPCPPKVHSEVQTDGNSQFA. Over residues 145–154 the composition is skewed to basic residues; sequence YGSKKKRHEK. A compositionally biased stretch (basic and acidic residues) spans 169–187; that stretch reads DNKKQIPNEASARSERDTS. A compositionally biased stretch (polar residues) spans 277–287; that stretch reads EVQTDGNSQFA. 2 coiled-coil regions span residues 383 to 413 and 483 to 618; these read LATNEEKCAREQIREATSERKDLNIHVRDTK and AMQP…AEKE. Residues Ser670, Ser754, and Ser798 each carry the phosphoserine modification.

Interacts with CEP63.

The protein localises to the cytoplasm. The protein resides in the cytoskeleton. Its subcellular location is the microtubule organizing center. It localises to the centrosome. It is found in the centriolar satellite. Negatively regulates centriole duplication. Negatively regulates CEP63 and CDK2 centrosomal localization. The protein is Coiled-coil domain-containing protein 14 (CCDC14) of Homo sapiens (Human).